The sequence spans 340 residues: Protein RecA (340 aa).

An ATP-binding site is contributed by 74–81 (GPESSGKT).

This sequence belongs to the RecA family.

The protein localises to the cytoplasm. In terms of biological role, can catalyze the hydrolysis of ATP in the presence of single-stranded DNA, the ATP-dependent uptake of single-stranded DNA by duplex DNA, and the ATP-dependent hybridization of homologous single-stranded DNAs. It interacts with LexA causing its activation and leading to its autocatalytic cleavage. The polypeptide is Protein RecA (Porphyromonas gingivalis (strain ATCC 33277 / DSM 20709 / CIP 103683 / JCM 12257 / NCTC 11834 / 2561)).